Consider the following 989-residue polypeptide: Phosphoenolpyruvate carboxylase (989 aa).

Active-site residues include His175 and Lys630.

This sequence belongs to the PEPCase type 1 family. The cofactor is Mg(2+).

It catalyses the reaction oxaloacetate + phosphate = phosphoenolpyruvate + hydrogencarbonate. Functionally, forms oxaloacetate, a four-carbon dicarboxylic acid source for the tricarboxylic acid cycle. This chain is Phosphoenolpyruvate carboxylase, found in Prochlorococcus marinus (strain MIT 9301).